The chain runs to 396 residues: Ribosomal RNA large subunit methyltransferase I (396 aa).

The region spanning 2–81 (SVRLVLAKGR…ESIDIAFFSR (80 aa)) is the PUA domain.

It belongs to the methyltransferase superfamily. RlmI family.

The protein resides in the cytoplasm. It carries out the reaction cytidine(1962) in 23S rRNA + S-adenosyl-L-methionine = 5-methylcytidine(1962) in 23S rRNA + S-adenosyl-L-homocysteine + H(+). Specifically methylates the cytosine at position 1962 (m5C1962) of 23S rRNA. This is Ribosomal RNA large subunit methyltransferase I from Shigella boydii serotype 4 (strain Sb227).